We begin with the raw amino-acid sequence, 67 residues long: DNA-directed RNA polymerase subunit omega (67 aa).

The protein belongs to the RNA polymerase subunit omega family. The RNAP catalytic core consists of 2 alpha, 1 beta, 1 beta' and 1 omega subunit. When a sigma factor is associated with the core the holoenzyme is formed, which can initiate transcription.

The catalysed reaction is RNA(n) + a ribonucleoside 5'-triphosphate = RNA(n+1) + diphosphate. Promotes RNA polymerase assembly. Latches the N- and C-terminal regions of the beta' subunit thereby facilitating its interaction with the beta and alpha subunits. This chain is DNA-directed RNA polymerase subunit omega, found in Variovorax paradoxus (strain S110).